Reading from the N-terminus, the 101-residue chain is Gastrin (101 aa).

The first 21 residues, 1-21 (MPRLCVYMLVLVLALATFSEA), serve as a signal peptide directing secretion. A disordered region spans residues 23-101 (WKPRSQLQDA…FGRRSAEEDQ (79 aa)). A compositionally biased stretch (polar residues) spans 25-37 (PRSQLQDASSGPG). Tyr87 bears the Sulfotyrosine mark. Residue Phe92 is modified to Phenylalanine amide. Basic and acidic residues predominate over residues 92-101 (FGRRSAEEDQ). Position 96 is a phosphoserine (Ser96). The propeptide occupies 96 to 101 (SAEEDQ).

It belongs to the gastrin/cholecystokinin family. In terms of processing, sulfation enhances proteolytic processing, and blocks peptide degradation. Levels of sulfation differ between proteolytically-cleaved gastrins and between tissues. In terms of tissue distribution, abundantly expressed in the stomach and duodenum. Low levels in brain, ovary and pancreas.

It localises to the secreted. Its function is as follows. Gastrin stimulates the stomach mucosa to produce and secrete hydrochloric acid and the pancreas to secrete its digestive enzymes. It also stimulates smooth muscle contraction and increases blood circulation and water secretion in the stomach and intestine. This is Gastrin (Gast) from Mus musculus (Mouse).